Consider the following 213-residue polypeptide: Thymidylate kinase (213 aa).

Glycine 10–threonine 17 is an ATP binding site.

It belongs to the thymidylate kinase family.

It carries out the reaction dTMP + ATP = dTDP + ADP. Its function is as follows. Phosphorylation of dTMP to form dTDP in both de novo and salvage pathways of dTTP synthesis. The polypeptide is Thymidylate kinase (Salmonella choleraesuis (strain SC-B67)).